A 291-amino-acid polypeptide reads, in one-letter code: HTH-type transcriptional regulator CitR (291 aa).

Residues 1–58 enclose the HTH lysR-type domain; it reads MDFKWLHTFVTAAKYENFRKTAETLFLSQPTVTVHIKQLEKEISCKLFERKGRQIQLT. The segment at residues 18–37 is a DNA-binding region (H-T-H motif); it reads FRKTAETLFLSQPTVTVHIK.

This sequence belongs to the LysR transcriptional regulatory family.

It is found in the cytoplasm. Its function is as follows. Negative regulatory protein for the citA gene for citrate synthase I. The protein is HTH-type transcriptional regulator CitR (citR) of Bacillus subtilis (strain 168).